The sequence spans 305 residues: Protein FdhE homolog (305 aa).

The protein belongs to the FdhE family.

It is found in the cytoplasm. Its function is as follows. Necessary for formate dehydrogenase activity. The chain is Protein FdhE homolog from Actinobacillus pleuropneumoniae serotype 7 (strain AP76).